Consider the following 346-residue polypeptide: uncharacterized protein (346 aa).

This sequence belongs to the IIV-6 359L family.

This is an uncharacterized protein from Invertebrate iridescent virus 6 (IIV-6).